The following is a 572-amino-acid chain: 2-succinyl-5-enolpyruvyl-6-hydroxy-3-cyclohexene-1-carboxylate synthase (572 aa).

Belongs to the TPP enzyme family. MenD subfamily. In terms of assembly, homodimer. It depends on Mg(2+) as a cofactor. Mn(2+) is required as a cofactor. The cofactor is thiamine diphosphate.

It carries out the reaction isochorismate + 2-oxoglutarate + H(+) = 5-enolpyruvoyl-6-hydroxy-2-succinyl-cyclohex-3-ene-1-carboxylate + CO2. The protein operates within quinol/quinone metabolism; 1,4-dihydroxy-2-naphthoate biosynthesis; 1,4-dihydroxy-2-naphthoate from chorismate: step 2/7. It functions in the pathway quinol/quinone metabolism; menaquinone biosynthesis. In terms of biological role, catalyzes the thiamine diphosphate-dependent decarboxylation of 2-oxoglutarate and the subsequent addition of the resulting succinic semialdehyde-thiamine pyrophosphate anion to isochorismate to yield 2-succinyl-5-enolpyruvyl-6-hydroxy-3-cyclohexene-1-carboxylate (SEPHCHC). The sequence is that of 2-succinyl-5-enolpyruvyl-6-hydroxy-3-cyclohexene-1-carboxylate synthase from Aeromonas salmonicida (strain A449).